The sequence spans 1254 residues: SUN domain-containing ossification factor (1254 aa).

Positions 1–29 (MKKHRRALALVSCLFLCSLVWLPSWRVCC) are cleaved as a signal peptide. Disordered stretches follow at residues 58–88 (KKDEREGPINAESLGKSGSNLPISPKEHKLK), 118–270 (EESS…DIPT), and 282–304 (EKEKSQSMHASSNGGSHATKKVQ). Residues 130-145 (VENISSSSTSEITPIS) show a composition bias toward low complexity. Acidic residues predominate over residues 165-175 (EQSETDCDVGE). Asparagine 202 and asparagine 236 each carry an N-linked (GlcNAc...) asparagine glycan. Positions 241–253 (LKNESSDYTKPGD) are enriched in basic and acidic residues. The SUN domain occupies 284 to 453 (EKSQSMHASS…SLIRVFGTSM (170 aa)). A compositionally biased stretch (polar residues) spans 288–297 (SMHASSNGGS). N-linked (GlcNAc...) asparagine glycosylation occurs at asparagine 524. Disordered stretches follow at residues 530–553 (NATATAAPKMPESTPVSTPVPSPE), 583–605 (EEEEEASPSTVTLLGSGEQEDES), and 759–788 (HIPSPVIPQESSVEIDNETEQKSESFSSIE). Over residues 540 to 553 (PESTPVSTPVPSPE) the composition is skewed to low complexity. Positions 909 to 1009 (NQKESVFMRL…VAELKREVSD (101 aa)) form a coiled coil. N-linked (GlcNAc...) asparagine glycosylation is found at asparagine 928 and asparagine 955. Residues 1011 to 1031 (QSYLVISLVLCVVLGLMLCMQ) traverse the membrane as a helical segment. The residue at position 1081 (serine 1081) is a Phosphoserine. The tract at residues 1152 to 1172 (EVYHSSYKGPPSEGSSETSSQ) is disordered. Residues 1163–1172 (SEGSSETSSQ) show a composition bias toward low complexity.

Post-translationally, O-glycosylated. O-mannosylated by POMT1 and POMT2 and elongated by POMGNT1. N-glycosylated. Highly expressed in pancreas and testis and to a lower extent in prostate, ovary, heart, thymus, small intestine and spleen.

It localises to the rough endoplasmic reticulum membrane. Its function is as follows. Required for bone modeling during late embryogenesis. Regulates type I collagen synthesis in osteoblasts during their postnatal maturation. In Homo sapiens (Human), this protein is SUN domain-containing ossification factor (SUCO).